We begin with the raw amino-acid sequence, 383 residues long: D-aspartate oxidase 3 (383 aa).

Residues 1–17 (MLYALLLLFGGVSTVSS) form the signal peptide. 2 residues coordinate FAD: Lys56 and Ser63. Residues Asn152, Asn271, and Asn320 are each glycosylated (N-linked (GlcNAc...) asparagine). Residue Thr339 coordinates FAD. N-linked (GlcNAc...) asparagine glycosylation occurs at Asn371.

Belongs to the DAMOX/DASOX family. The cofactor is FAD. As to expression, in both sexes, present in coelomocytes (at protein level). Expressed in hypodermal cells and the proximal gonadal sheath cells in adult hermaphrodites (at protein level). Also expressed in probable head mesodermal cells and unidentified cells in the head, and vulval muscles in adult hermaphrodites. Expressed in the seminal vesicle, spicule and tail cells in adult males (at protein level).

It localises to the secreted. It catalyses the reaction D-aspartate + O2 + H2O = oxaloacetate + H2O2 + NH4(+). It carries out the reaction D-glutamate + O2 + H2O = H2O2 + 2-oxoglutarate + NH4(+). In terms of biological role, selectively catalyzes the oxidative deamination of acidic amino acids. Plays a role in the egg-laying events and maturation processes of the reproductive organs. This Caenorhabditis elegans protein is D-aspartate oxidase 3 (ddo-3).